The following is a 179-amino-acid chain: Inner membrane-spanning protein YciB (179 aa).

Transmembrane regions (helical) follow at residues 11-31 (ILFF…TLII), 52-69 (LIMG…AYFN), 71-91 (LEFL…ILLV), 121-141 (LGWA…SQYL), and 149-169 (FKTF…GVYI).

The protein belongs to the YciB family.

It is found in the cell inner membrane. In terms of biological role, plays a role in cell envelope biogenesis, maintenance of cell envelope integrity and membrane homeostasis. In Histophilus somni (strain 129Pt) (Haemophilus somnus), this protein is Inner membrane-spanning protein YciB.